The following is a 119-amino-acid chain: Mitochondrial zinc maintenance protein 1, mitochondrial (119 aa).

The transit peptide at 1-14 directs the protein to the mitochondrion; sequence MSNIRALGAYRNAL.

Belongs to the complex I LYR family. MZM1 subfamily. Interacts with RIP1.

Its subcellular location is the mitochondrion matrix. Functionally, assembly factor required for Rieske Fe-S protein RIP1 incorporation into the cytochrome b-c1 (CIII) complex. Functions as a chaperone, binding to this subunit within the mitochondrial matrix and stabilizing it prior to its translocation and insertion into the late CIII dimeric intermediate within the mitochondrial inner membrane. Modulates the mitochondrial matrix zinc pool. The protein is Mitochondrial zinc maintenance protein 1, mitochondrial (MZM1) of Debaryomyces hansenii (strain ATCC 36239 / CBS 767 / BCRC 21394 / JCM 1990 / NBRC 0083 / IGC 2968) (Yeast).